Reading from the N-terminus, the 115-residue chain is Insulin-like peptide IlO1_i1 (115 aa).

An N-terminal signal peptide occupies residues 1-20; that stretch reads MFVYTTIMLLLLAEINHSQG. 3 disulfides stabilise this stretch: cysteine 40–cysteine 101, cysteine 52–cysteine 114, and cysteine 100–cysteine 105. Positions 59-93 are cleaved as a propeptide — c peptide; the sequence is RRNRITGLDQRSIFESNLLAKRFLISRRQIVNNRR.

The protein belongs to the insulin family. Expressed in tentacles.

The protein localises to the secreted. Its function is as follows. Heterodimer with unknown function. Surprisingly, the truncated synthetic analog (dimer of 27-58 and 94-115) does not bind to long insulin receptor (HIR-B) and insulin-like growth factor 1 receptor. This truncated synthetic analog shows very weak inhibitory activity on different voltage-gated channels. The protein is Insulin-like peptide IlO1_i1 of Oulactis sp. (Sea anemone).